The following is a 381-amino-acid chain: Fatty acid elongase 6 (381 aa).

Transmembrane regions (helical) follow at residues 10-30, 69-89, 107-127, 153-173, 182-202, 216-236, and 280-300; these read IAAAIEVPDWVLTKSAALVYS, LPYLNPWHVIASILAYLSLIV, GLVHNLGLHLLSLYMSLGLMI, LIWLFYVSKVVEWVDTVIMLL, FLHVYHHTTVFVLWWLALLVA, GVHVFMYGYYFLTLLFPSGIV, and LLQILFWYMISLLALFGNFLV. The HxxHH motif motif lies at 184-188; the sequence is HVYHH. The Nucleophile role is filled by histidine 187. The interval 362 to 381 is disordered; it reads RKNGNGNGQKASLQAMAGSR.

The protein belongs to the ELO family.

The protein localises to the membrane. It participates in lipid metabolism; polyunsaturated fatty acid biosynthesis. Involved in the synthesis of fatty acids. Elongates C18 polyunsaturated fatty acids (PUFAs) with a preference for Delta6 PUFAs. The protein is Fatty acid elongase 6 of Leishmania major.